Reading from the N-terminus, the 99-residue chain is Large ribosomal subunit protein bL27 (99 aa).

Residues 1 to 9 constitute a propeptide that is removed on maturation; it reads MLIMNLQLF.

It belongs to the bacterial ribosomal protein bL27 family. The N-terminus is cleaved by ribosomal processing cysteine protease Prp.

This Clostridium beijerinckii (strain ATCC 51743 / NCIMB 8052) (Clostridium acetobutylicum) protein is Large ribosomal subunit protein bL27.